We begin with the raw amino-acid sequence, 120 residues long: NAD(P)H-quinone oxidoreductase subunit 3, chloroplastic (120 aa).

The next 3 helical transmembrane spans lie at 9–29, 64–84, and 88–108; these read IFWAFLIISSVIPILAFLISG, MFALVFVVFDVETVFLYPWAM, and VLGVSVFVEALIFVLILIVGL.

It belongs to the complex I subunit 3 family. As to quaternary structure, NDH is composed of at least 16 different subunits, 5 of which are encoded in the nucleus.

It localises to the plastid. The protein resides in the chloroplast thylakoid membrane. It catalyses the reaction a plastoquinone + NADH + (n+1) H(+)(in) = a plastoquinol + NAD(+) + n H(+)(out). The catalysed reaction is a plastoquinone + NADPH + (n+1) H(+)(in) = a plastoquinol + NADP(+) + n H(+)(out). In terms of biological role, NDH shuttles electrons from NAD(P)H:plastoquinone, via FMN and iron-sulfur (Fe-S) centers, to quinones in the photosynthetic chain and possibly in a chloroplast respiratory chain. The immediate electron acceptor for the enzyme in this species is believed to be plastoquinone. Couples the redox reaction to proton translocation, and thus conserves the redox energy in a proton gradient. The protein is NAD(P)H-quinone oxidoreductase subunit 3, chloroplastic of Ranunculus macranthus (Large buttercup).